Reading from the N-terminus, the 113-residue chain is UPF0482 protein YnfB (113 aa).

A signal peptide spans 1–28 (MKITLSKRIGLLAFLLPCALALSTTVHA).

The protein belongs to the UPF0482 family.

The polypeptide is UPF0482 protein YnfB (Escherichia coli O127:H6 (strain E2348/69 / EPEC)).